The following is a 1435-amino-acid chain: Gag-Pol polyprotein (1435 aa).

The N-myristoyl glycine; by host moiety is linked to residue Gly2. The interaction with Gp41 stretch occupies residues 7–31 (VLSGGELDKWEKIRLRPGGKKQYKL). The tract at residues 8 to 43 (LSGGELDKWEKIRLRPGGKKQYKLKHIVWASRELER) is interaction with host CALM1. An interaction with host AP3D1 region spans residues 12-19 (ELDKWEKI). Residues 14–33 (DKWEKIRLRPGGKKQYKLKH) are interaction with membrane phosphatidylinositol 4,5-bisphosphate and RNA. Residues 16–22 (WEKIRLR) carry the Nuclear export signal motif. A Nuclear localization signal motif is present at residues 26-32 (KKQYKLK). An interaction with membrane phosphatidylinositol 4,5-bisphosphate region spans residues 73–77 (EELRS). The disordered stretch occupies residues 106–128 (EEQNKSKKKAQQAAADTGNNSQV). Residue Tyr132 is modified to Phosphotyrosine; by host. At Ser148 the chain carries Phosphoserine; by host MAPK1. Residues 189–227 (NTVGGHQAAMQMLKETINEEAAEWDRLHPVHAGPIAPGQ) are interaction with human PPIA/CYPA and NUP153. Residues 277–363 (YSPTSILDIR…GGPGHKARVL (87 aa)) are dimerization/Multimerization of capsid protein p24. 2 consecutive CCHC-type zinc fingers follow at residues 390-407 (VKCFNCGKEGHIAKNCRA) and 411-428 (KGCWKCGKEGHQMKDCTE). The disordered stretch occupies residues 444–464 (KAREFSSEQTRANSPTRRELQ). Positions 489–493 (PQITL) are dimerization of protease. A Peptidase A2 domain is found at 508 to 577 (KEALLDTGAD…TPVNIIGRNL (70 aa)). The For protease activity; shared with dimeric partner role is filled by Asp513. Dimerization of protease stretches follow at residues 537–543 (GIGGFIK) and 576–588 (NLLTQIGCTLNFP). Residues 631–821 (EGKISKIGPE…PPFLWMGYEL (191 aa)) form the Reverse transcriptase domain. Asp697, Asp772, and Asp773 together coordinate Mg(2+). The RT 'primer grip' stretch occupies residues 814-822 (FLWMGYELH). Positions 985 to 1001 (WEAWWTEYWQATWIPEW) match the Tryptophan repeat motif motif. In terms of domain architecture, RNase H type-1 spans 1021–1144 (IIGAETFYVD…VDGLVSAGIR (124 aa)). Residues Asp1030, Glu1065, Asp1085, and Asp1136 each contribute to the Mg(2+) site. An Integrase-type zinc finger spans residues 1150–1191 (DGIDKAQEEHEKYHSNWRAMASDFNLPPVVAKEIVASCDKCQ). Zn(2+) is bound by residues His1159, His1163, Cys1187, and Cys1190. In terms of domain architecture, Integrase catalytic spans 1201-1351 (VDCSPGIWQL…SAGERIVDII (151 aa)). Mg(2+) is bound by residues Asp1211, Asp1263, and Glu1299. The integrase-type DNA-binding region spans 1370-1417 (FRVYYRDSRDPVWKGPAKLLWKGEGAVVIQDNSDIKVVPRRKAKIIRD).

Homotrimer; further assembles as hexamers of trimers. Matrix protein p17: Interacts with gp41 (via C-terminus). Interacts with host CALM1; this interaction induces a conformational change in the Matrix protein, triggering exposure of the myristate group. Interacts with host AP3D1; this interaction allows the polyprotein trafficking to multivesicular bodies during virus assembly. Part of the pre-integration complex (PIC) which is composed of viral genome, matrix protein, Vpr and integrase. In terms of assembly, homodimer; the homodimer further multimerizes as homohexamers or homopentamers. Interacts with human PPIA/CYPA; This interaction stabilizes the capsid. Interacts with human NUP153. Interacts with host PDZD8; this interaction stabilizes the capsid. Interacts with monkey TRIM5; this interaction destabilizes the capsid. As to quaternary structure, homodimer, whose active site consists of two apposed aspartic acid residues. Heterodimer of p66 RT and p51 RT (RT p66/p51). Heterodimerization of RT is essential for DNA polymerase activity. The overall folding of the subdomains is similar in p66 RT and p51 RT but the spatial arrangements of the subdomains are dramatically different. In terms of assembly, homotetramer; may further associate as a homohexadecamer. Part of the pre-integration complex (PIC) which is composed of viral genome, matrix protein, Vpr and integrase. Interacts with human SMARCB1/INI1 and human PSIP1/LEDGF isoform 1. Interacts with human KPNA3; this interaction might play a role in nuclear import of the pre-integration complex. Interacts with human NUP153; this interaction might play a role in nuclear import of the pre-integration complex. Requires Mg(2+) as cofactor. In terms of processing, specific enzymatic cleavages by the viral protease yield mature proteins. The protease is released by autocatalytic cleavage. The polyprotein is cleaved during and after budding, this process is termed maturation. Proteolytic cleavage of p66 RT removes the RNase H domain to yield the p51 RT subunit. Nucleocapsid protein p7 might be further cleaved after virus entry. Tyrosine phosphorylated presumably in the virion by a host kinase. Phosphorylation is apparently not a major regulator of membrane association. Post-translationally, phosphorylated possibly by host MAPK1; this phosphorylation is necessary for Pin1-mediated virion uncoating. In terms of processing, methylated by host PRMT6, impairing its function by reducing RNA annealing and the initiation of reverse transcription.

Its subcellular location is the host cell membrane. The protein localises to the host endosome. The protein resides in the host multivesicular body. It localises to the virion membrane. It is found in the host nucleus. Its subcellular location is the host cytoplasm. The protein localises to the virion. It carries out the reaction Specific for a P1 residue that is hydrophobic, and P1' variable, but often Pro.. It catalyses the reaction Endohydrolysis of RNA in RNA/DNA hybrids. Three different cleavage modes: 1. sequence-specific internal cleavage of RNA. Human immunodeficiency virus type 1 and Moloney murine leukemia virus enzymes prefer to cleave the RNA strand one nucleotide away from the RNA-DNA junction. 2. RNA 5'-end directed cleavage 13-19 nucleotides from the RNA end. 3. DNA 3'-end directed cleavage 15-20 nucleotides away from the primer terminus.. The catalysed reaction is 3'-end directed exonucleolytic cleavage of viral RNA-DNA hybrid.. The enzyme catalyses DNA(n) + a 2'-deoxyribonucleoside 5'-triphosphate = DNA(n+1) + diphosphate. With respect to regulation, protease: The viral protease is inhibited by many synthetic protease inhibitors (PIs), such as amprenavir, atazanavir, indinavir, loprinavir, nelfinavir, ritonavir and saquinavir. Use of protease inhibitors in tritherapy regimens permit more ambitious therapeutic strategies. Reverse transcriptase/ribonuclease H: RT can be inhibited either by nucleoside RT inhibitors (NRTIs) or by non nucleoside RT inhibitors (NNRTIs). NRTIs act as chain terminators, whereas NNRTIs inhibit DNA polymerization by binding a small hydrophobic pocket near the RT active site and inducing an allosteric change in this region. Classical NRTIs are abacavir, adefovir (PMEA), didanosine (ddI), lamivudine (3TC), stavudine (d4T), tenofovir (PMPA), zalcitabine (ddC), and zidovudine (AZT). Classical NNRTIs are atevirdine (BHAP U-87201E), delavirdine, efavirenz (DMP-266), emivirine (I-EBU), and nevirapine (BI-RG-587). The tritherapies used as a basic effective treatment of AIDS associate two NRTIs and one NNRTI. Functionally, mediates, with Gag polyprotein, the essential events in virion assembly, including binding the plasma membrane, making the protein-protein interactions necessary to create spherical particles, recruiting the viral Env proteins, and packaging the genomic RNA via direct interactions with the RNA packaging sequence (Psi). Gag-Pol polyprotein may regulate its own translation, by the binding genomic RNA in the 5'-UTR. At low concentration, the polyprotein would promote translation, whereas at high concentration, the polyprotein would encapsidate genomic RNA and then shut off translation. Its function is as follows. Targets the polyprotein to the plasma membrane via a multipartite membrane-binding signal, that includes its myristoylated N-terminus. Matrix protein is part of the pre-integration complex. Implicated in the release from host cell mediated by Vpu. Binds to RNA. In terms of biological role, forms the conical core that encapsulates the genomic RNA-nucleocapsid complex in the virion. Most core are conical, with only 7% tubular. The core is constituted by capsid protein hexamer subunits. The core is disassembled soon after virion entry. Host restriction factors such as TRIM5-alpha or TRIMCyp bind retroviral capsids and cause premature capsid disassembly, leading to blocks in reverse transcription. Capsid restriction by TRIM5 is one of the factors which restricts HIV-1 to the human species. Host PIN1 apparently facilitates the virion uncoating. On the other hand, interactions with PDZD8 or CYPA stabilize the capsid. Encapsulates and protects viral dimeric unspliced genomic RNA (gRNA). Binds these RNAs through its zinc fingers. Acts as a nucleic acid chaperone which is involved in rearangement of nucleic acid secondary structure during gRNA retrotranscription. Also facilitates template switch leading to recombination. As part of the polyprotein, participates in gRNA dimerization, packaging, tRNA incorporation and virion assembly. Functionally, aspartyl protease that mediates proteolytic cleavages of Gag and Gag-Pol polyproteins during or shortly after the release of the virion from the plasma membrane. Cleavages take place as an ordered, step-wise cascade to yield mature proteins. This process is called maturation. Displays maximal activity during the budding process just prior to particle release from the cell. Also cleaves Nef and Vif, probably concomitantly with viral structural proteins on maturation of virus particles. Hydrolyzes host EIF4GI and PABP1 in order to shut off the capped cellular mRNA translation. The resulting inhibition of cellular protein synthesis serves to ensure maximal viral gene expression and to evade host immune response. Also mediates cleavage of host YTHDF3. Mediates cleavage of host CARD8, thereby activating the CARD8 inflammasome, leading to the clearance of latent HIV-1 in patient CD4(+) T-cells after viral reactivation; in contrast, HIV-1 can evade CARD8-sensing when its protease remains inactive in infected cells prior to viral budding. Its function is as follows. Multifunctional enzyme that converts the viral RNA genome into dsDNA in the cytoplasm, shortly after virus entry into the cell. This enzyme displays a DNA polymerase activity that can copy either DNA or RNA templates, and a ribonuclease H (RNase H) activity that cleaves the RNA strand of RNA-DNA heteroduplexes in a partially processive 3' to 5' endonucleasic mode. Conversion of viral genomic RNA into dsDNA requires many steps. A tRNA(3)-Lys binds to the primer-binding site (PBS) situated at the 5'-end of the viral RNA. RT uses the 3' end of the tRNA primer to perform a short round of RNA-dependent minus-strand DNA synthesis. The reading proceeds through the U5 region and ends after the repeated (R) region which is present at both ends of viral RNA. The portion of the RNA-DNA heteroduplex is digested by the RNase H, resulting in a ssDNA product attached to the tRNA primer. This ssDNA/tRNA hybridizes with the identical R region situated at the 3' end of viral RNA. This template exchange, known as minus-strand DNA strong stop transfer, can be either intra- or intermolecular. RT uses the 3' end of this newly synthesized short ssDNA to perform the RNA-dependent minus-strand DNA synthesis of the whole template. RNase H digests the RNA template except for two polypurine tracts (PPTs) situated at the 5'-end and near the center of the genome. It is not clear if both polymerase and RNase H activities are simultaneous. RNase H probably can proceed both in a polymerase-dependent (RNA cut into small fragments by the same RT performing DNA synthesis) and a polymerase-independent mode (cleavage of remaining RNA fragments by free RTs). Secondly, RT performs DNA-directed plus-strand DNA synthesis using the PPTs that have not been removed by RNase H as primers. PPTs and tRNA primers are then removed by RNase H. The 3' and 5' ssDNA PBS regions hybridize to form a circular dsDNA intermediate. Strand displacement synthesis by RT to the PBS and PPT ends produces a blunt ended, linear dsDNA copy of the viral genome that includes long terminal repeats (LTRs) at both ends. In terms of biological role, catalyzes viral DNA integration into the host chromosome, by performing a series of DNA cutting and joining reactions. This enzyme activity takes place after virion entry into a cell and reverse transcription of the RNA genome in dsDNA. The first step in the integration process is 3' processing. This step requires a complex comprising the viral genome, matrix protein, Vpr and integrase. This complex is called the pre-integration complex (PIC). The integrase protein removes 2 nucleotides from each 3' end of the viral DNA, leaving recessed CA OH's at the 3' ends. In the second step, the PIC enters cell nucleus. This process is mediated through integrase and Vpr proteins, and allows the virus to infect a non dividing cell. This ability to enter the nucleus is specific of lentiviruses, other retroviruses cannot and rely on cell division to access cell chromosomes. In the third step, termed strand transfer, the integrase protein joins the previously processed 3' ends to the 5' ends of strands of target cellular DNA at the site of integration. The 5'-ends are produced by integrase-catalyzed staggered cuts, 5 bp apart. A Y-shaped, gapped, recombination intermediate results, with the 5'-ends of the viral DNA strands and the 3' ends of target DNA strands remaining unjoined, flanking a gap of 5 bp. The last step is viral DNA integration into host chromosome. This involves host DNA repair synthesis in which the 5 bp gaps between the unjoined strands are filled in and then ligated. Since this process occurs at both cuts flanking the HIV genome, a 5 bp duplication of host DNA is produced at the ends of HIV-1 integration. Alternatively, Integrase may catalyze the excision of viral DNA just after strand transfer, this is termed disintegration. In Human immunodeficiency virus type 1 group M subtype B (isolate NY5) (HIV-1), this protein is Gag-Pol polyprotein (gag-pol).